The chain runs to 269 residues: Ribosomal RNA small subunit methyltransferase J (269 aa).

S-adenosyl-L-methionine contacts are provided by residues 124–125 and Asp-188; that span reads ER.

Belongs to the methyltransferase superfamily. RsmJ family.

It localises to the cytoplasm. It catalyses the reaction guanosine(1516) in 16S rRNA + S-adenosyl-L-methionine = N(2)-methylguanosine(1516) in 16S rRNA + S-adenosyl-L-homocysteine + H(+). In terms of biological role, specifically methylates the guanosine in position 1516 of 16S rRNA. The chain is Ribosomal RNA small subunit methyltransferase J from Saccharophagus degradans (strain 2-40 / ATCC 43961 / DSM 17024).